A 171-amino-acid polypeptide reads, in one-letter code: Small ribosomal subunit protein uS5 (171 aa).

The region spanning 15–78 (LKDRLVAINR…EAAKKNLTRV (64 aa)) is the S5 DRBM domain.

This sequence belongs to the universal ribosomal protein uS5 family. Part of the 30S ribosomal subunit. Contacts proteins S4 and S8.

Functionally, with S4 and S12 plays an important role in translational accuracy. In terms of biological role, located at the back of the 30S subunit body where it stabilizes the conformation of the head with respect to the body. The polypeptide is Small ribosomal subunit protein uS5 (Phocaeicola vulgatus (strain ATCC 8482 / DSM 1447 / JCM 5826 / CCUG 4940 / NBRC 14291 / NCTC 11154) (Bacteroides vulgatus)).